Here is an 842-residue protein sequence, read N- to C-terminus: Pentatricopeptide repeat-containing protein At3g22690 (842 aa).

PPR repeat units follow at residues 98-132 (TCFMYNSLIRGYASSGLCNEAILLFLRMMNSGISP), 133-167 (DKYTFPFGLSACAKSRAKGNGIQIHGLIVKMGYAK), 168-202 (DLFVQNSLVHFYAECGELDSARKVFDEMSERNVVS), 203-234 (WTSMICGYARRDFAKDAVDLFFRMVRDEEVTP), 235-269 (NSVTMVCVISACAKLEDLETGEKVYAFIRNSGIEV), 270-300 (NDLMVSALVDMYMKCNAIDVAKRLFDEYGAS), 301-335 (NLDLCNAMASNYVRQGLTREALGVFNLMMDSGVRP), 336-370 (DRISMLSAISSCSQLRNILWGKSCHGYVLRNGFES), 371-401 (WDNICNALIDMYMKCHRQDTAFRIFDRMSNK), 402-436 (TVVTWNSIVAGYVENGEVDAAWETFETMPEKNIVS), 437-463 (WNTIISGLVQGSLFEEAIEVFCSMQSQ), 469-503 (DGVTMMSIASACGHLGALDLAKWIYYYIEKNGIQL), 504-534 (DVRLGTTLVDMFSRCGDPESAMSIFNSLTNR), 535-569 (DVSAWTAAIGAMAMAGNAERAIELFDDMIEQGLKP), 570-605 (DGVAFVGALTACSHGGLVQQGKEIFYSMLKLHGVSP), and 606-636 (EDVHYGCMVDLLGRAGLLEEAVQLIEDMPME). Positions 641–716 (IWNSLLAACR…PPGTSSIQIR (76 aa)) are type E motif. The type E(+) motif stretch occupies residues 717-747 (GKTHEFTSGDESHPEMPNIEAMLDEVSQRAS). A type DYW motif region spans residues 748 to 842 (HLGHVPDLSN…QGKCSCGDFW (95 aa)).

The protein belongs to the PPR family. PCMP-H subfamily.

This Arabidopsis thaliana (Mouse-ear cress) protein is Pentatricopeptide repeat-containing protein At3g22690 (PCMP-H56).